The chain runs to 382 residues: Innexin-8 (382 aa).

4 consecutive transmembrane segments (helical) span residues 29-49 (LITAFLFITAAILTSAKTYVG), 103-123 (QWSSMYLAVAGIAFMIPKFLW), 187-207 (VIKILYLVNAIAQFVIIAIFL), and 270-290 (IFLFFWFWLVFLVFSTLIAHF).

This sequence belongs to the pannexin family.

Its subcellular location is the cell membrane. It is found in the cell junction. The protein resides in the gap junction. In terms of biological role, structural component of the gap junctions. This chain is Innexin-8 (inx-8), found in Caenorhabditis elegans.